Here is a 348-residue protein sequence, read N- to C-terminus: MFLGPLMLDIAGTTLTETDRVQLSHPLVGGVILFARNYESPAQLSELTASIHALRSPPLLIAVDQEGGRVQRFRDGFTRLPPMRTLGEIQDRNPDLSLHLARQIGYVLAAELKACGVDVSFTPVLDLDCEQSSVIGDRAFYREPQVVAELAHALMSGLQSVGMVAVGKHFPGHGAIQADTHVETAIDSRNYTDIEKKDLTPFRRMIDTGLSGIMAAHVIYPAIDPNPAGFSSKWLQDILRNELGFRGCIFSDDLCMQAARNYGSITHRAEQALQAGCNMVLICNDPDSADELLTSLQWEFSAVDTARLEHMRGQQTVHSMAQLHEMERFIRATEEISRISLANISVSV.

Substrate is bound by residues Asp-64, Arg-72, Arg-138, and 168–169 (KH). The active-site Proton donor/acceptor is His-181. Asp-252 functions as the Nucleophile in the catalytic mechanism.

It belongs to the glycosyl hydrolase 3 family. NagZ subfamily.

It is found in the cytoplasm. It carries out the reaction Hydrolysis of terminal non-reducing N-acetyl-D-hexosamine residues in N-acetyl-beta-D-hexosaminides.. Its pathway is cell wall biogenesis; peptidoglycan recycling. Functionally, plays a role in peptidoglycan recycling by cleaving the terminal beta-1,4-linked N-acetylglucosamine (GlcNAc) from peptide-linked peptidoglycan fragments, giving rise to free GlcNAc, anhydro-N-acetylmuramic acid and anhydro-N-acetylmuramic acid-linked peptides. The chain is Beta-hexosaminidase from Nitrosomonas eutropha (strain DSM 101675 / C91 / Nm57).